We begin with the raw amino-acid sequence, 101 residues long: NAD(P)H-quinone oxidoreductase subunit 4L, chloroplastic (101 aa).

3 helical membrane passes run 2–22, 32–52, and 61–81; these read MLEH…YGLI, MCLE…SDFF, and IFSI…LAIV.

It belongs to the complex I subunit 4L family. NDH is composed of at least 16 different subunits, 5 of which are encoded in the nucleus.

Its subcellular location is the plastid. The protein localises to the chloroplast thylakoid membrane. It carries out the reaction a plastoquinone + NADH + (n+1) H(+)(in) = a plastoquinol + NAD(+) + n H(+)(out). It catalyses the reaction a plastoquinone + NADPH + (n+1) H(+)(in) = a plastoquinol + NADP(+) + n H(+)(out). NDH shuttles electrons from NAD(P)H:plastoquinone, via FMN and iron-sulfur (Fe-S) centers, to quinones in the photosynthetic chain and possibly in a chloroplast respiratory chain. The immediate electron acceptor for the enzyme in this species is believed to be plastoquinone. Couples the redox reaction to proton translocation, and thus conserves the redox energy in a proton gradient. The chain is NAD(P)H-quinone oxidoreductase subunit 4L, chloroplastic from Helianthus annuus (Common sunflower).